We begin with the raw amino-acid sequence, 206 residues long: MELKLLQDNGTLGAGVQASPEVFEREYNEALVHQVVVAYQANARSGNRAQKDREQVKHTTKKPWRQKGTGRARAGMSSSPLWRGGGRIFPNSPEENFSQKVNKKMYRAGMRSILSQLAREGRLNVVDQFSLDAPKTKVLADKVKAMGLDSVLIIVDQVSENLYLASRNLHKVAVCEPQHADPLALVQYKKVLVSKAAIAKIEELLK.

The interval 43–94 is disordered; the sequence is ARSGNRAQKDREQVKHTTKKPWRQKGTGRARAGMSSSPLWRGGGRIFPNSPE. Over residues 58-70 the composition is skewed to basic residues; sequence HTTKKPWRQKGTG.

It belongs to the universal ribosomal protein uL4 family. In terms of assembly, part of the 50S ribosomal subunit.

Functionally, one of the primary rRNA binding proteins, this protein initially binds near the 5'-end of the 23S rRNA. It is important during the early stages of 50S assembly. It makes multiple contacts with different domains of the 23S rRNA in the assembled 50S subunit and ribosome. Its function is as follows. Forms part of the polypeptide exit tunnel. In Polynucleobacter asymbioticus (strain DSM 18221 / CIP 109841 / QLW-P1DMWA-1) (Polynucleobacter necessarius subsp. asymbioticus), this protein is Large ribosomal subunit protein uL4.